The chain runs to 370 residues: Chaperone protein DnaJ (370 aa).

Positions 4–68 (DYYQVLGVSK…QKRAAYDRFG (65 aa)) constitute a J domain. Residues 133–211 (GIEKNISFSS…CHGMGRYHKQ (79 aa)) form a CR-type zinc finger. Zn(2+) contacts are provided by cysteine 146, cysteine 149, cysteine 163, cysteine 166, cysteine 185, cysteine 188, cysteine 199, and cysteine 202. 4 CXXCXGXG motif repeats span residues 146–153 (CDTCHGTG), 163–170 (CDACGGVG), 185–192 (CHKCQGNG), and 199–206 (CKKCHGMG).

It belongs to the DnaJ family. As to quaternary structure, homodimer. Requires Zn(2+) as cofactor.

The protein localises to the cytoplasm. Participates actively in the response to hyperosmotic and heat shock by preventing the aggregation of stress-denatured proteins and by disaggregating proteins, also in an autonomous, DnaK-independent fashion. Unfolded proteins bind initially to DnaJ; upon interaction with the DnaJ-bound protein, DnaK hydrolyzes its bound ATP, resulting in the formation of a stable complex. GrpE releases ADP from DnaK; ATP binding to DnaK triggers the release of the substrate protein, thus completing the reaction cycle. Several rounds of ATP-dependent interactions between DnaJ, DnaK and GrpE are required for fully efficient folding. Also involved, together with DnaK and GrpE, in the DNA replication of plasmids through activation of initiation proteins. The protein is Chaperone protein DnaJ of Rickettsia prowazekii (strain Madrid E).